Consider the following 436-residue polypeptide: Xylose isomerase (436 aa).

Mg(2+)-binding residues include D306 and D308.

Belongs to the xylose isomerase family. In terms of assembly, homotetramer. The cofactor is Mg(2+).

The protein localises to the cytoplasm. The catalysed reaction is alpha-D-xylose = alpha-D-xylulofuranose. This chain is Xylose isomerase, found in Rhizobium rhizogenes (strain K84 / ATCC BAA-868) (Agrobacterium radiobacter).